We begin with the raw amino-acid sequence, 768 residues long: cGMP-dependent protein kinase, isozyme 1 (768 aa).

Residues 1 to 192 form a regulatory region; the sequence is MAAGMLTDRE…NDFLKNIDAS (192 aa). Positions 114–127 are enriched in low complexity; the sequence is PLASTSSASPSGRT. The segment at 114–134 is disordered; sequence PLASTSSASPSGRTSADEVRP. Residues 249–252, 259–260, Arg366, 375–378, 385–386, and Tyr421 each bind 3',5'-cyclic GMP; these read GELA, RT, and GEQA. In terms of domain architecture, Protein kinase spans 457-717; sequence LEVVSTLGIG…IQDIKKHKWF (261 aa). ATP contacts are provided by residues 463 to 471 and Lys488; that span reads LGIGGFGRV. Asp582 acts as the Proton acceptor in catalysis. Positions 718-768 constitute an AGC-kinase C-terminal domain; it reads LGFDWDGLASQLLIPPFVRPIAHPTDVRYFDRFPCDLNEPPDELSGWDADF.

This sequence belongs to the protein kinase superfamily. AGC Ser/Thr protein kinase family. cGMP subfamily. As to quaternary structure, homodimer. Mg(2+) is required as a cofactor. In terms of processing, autophosphorylated. As to expression, in embryo stage 13, expression is seen in a few large, irregular cells having the appearance of hemocytes or macrophages. In adults, expression is seen in optic lamina and weakly in testis.

It carries out the reaction L-seryl-[protein] + ATP = O-phospho-L-seryl-[protein] + ADP + H(+). It catalyses the reaction L-threonyl-[protein] + ATP = O-phospho-L-threonyl-[protein] + ADP + H(+). Its activity is regulated as follows. Binding of cGMP results in enzyme activation. This chain is cGMP-dependent protein kinase, isozyme 1 (Pkg21D), found in Drosophila melanogaster (Fruit fly).